The primary structure comprises 246 residues: tRNA (guanine-N(1)-)-methyltransferase (246 aa).

S-adenosyl-L-methionine is bound by residues Gly-113 and 132–137; that span reads LGDFVV.

The protein belongs to the RNA methyltransferase TrmD family. In terms of assembly, homodimer.

The protein localises to the cytoplasm. It carries out the reaction guanosine(37) in tRNA + S-adenosyl-L-methionine = N(1)-methylguanosine(37) in tRNA + S-adenosyl-L-homocysteine + H(+). In terms of biological role, specifically methylates guanosine-37 in various tRNAs. This Latilactobacillus sakei subsp. sakei (strain 23K) (Lactobacillus sakei subsp. sakei) protein is tRNA (guanine-N(1)-)-methyltransferase.